A 467-amino-acid polypeptide reads, in one-letter code: Cysteine--tRNA ligase (467 aa).

A Zn(2+)-binding site is contributed by Cys-29. The short motif at 31 to 41 is the 'HIGH' region element; it reads PTVYNYVHIGN. 3 residues coordinate Zn(2+): Cys-209, His-234, and Glu-238. The 'KMSKS' region motif lies at 267–271; the sequence is KMSKS. Lys-270 lines the ATP pocket.

The protein belongs to the class-I aminoacyl-tRNA synthetase family. Monomer. Zn(2+) is required as a cofactor.

Its subcellular location is the cytoplasm. The enzyme catalyses tRNA(Cys) + L-cysteine + ATP = L-cysteinyl-tRNA(Cys) + AMP + diphosphate. This Xylella fastidiosa (strain 9a5c) protein is Cysteine--tRNA ligase.